We begin with the raw amino-acid sequence, 203 residues long: Small ribosomal subunit protein uS4 (203 aa).

The S4 RNA-binding domain occupies 92 to 164; the sequence is TRLDSVVYLL…LEENRIRNVP (73 aa).

Belongs to the universal ribosomal protein uS4 family. In terms of assembly, part of the 30S ribosomal subunit. Contacts protein S5. The interaction surface between S4 and S5 is involved in control of translational fidelity.

In terms of biological role, one of the primary rRNA binding proteins, it binds directly to 16S rRNA where it nucleates assembly of the body of the 30S subunit. Its function is as follows. With S5 and S12 plays an important role in translational accuracy. The protein is Small ribosomal subunit protein uS4 of Opitutus terrae (strain DSM 11246 / JCM 15787 / PB90-1).